The primary structure comprises 376 residues: uncharacterized protein (376 aa).

A signal peptide spans 1–28; the sequence is MCKPRVWRIAHTIVHVGALLLGTSQLTT. Cysteine 29 carries the N-palmitoyl cysteine lipid modification. Cysteine 29 carries the S-diacylglycerol cysteine lipid modification.

Belongs to the TP013X lipoprotein family.

It is found in the cell membrane. This is an uncharacterized protein from Treponema pallidum (strain Nichols).